A 593-amino-acid chain; its full sequence is ATP-dependent lipid A-core flippase (593 aa).

6 helical membrane passes run 33-55, 67-87, 146-166, 169-189, 258-278, and 284-304; these read YIFL…YGFG, ILML…VGSF, AIIT…VMFV, WQLS…ISII, VIQI…AIFG, and GSSW…AAIL. The ABC transmembrane type-1 domain occupies 38–319; that stretch reads ADASMIYLIN…LTKVNVVIQK (282 aa). Residues 351–585 form the ABC transporter domain; the sequence is VTIKDLSFAF…GGLYTGSINR (235 aa). 383–390 is an ATP binding site; that stretch reads GKSGSGKT.

Belongs to the ABC transporter superfamily. Lipid exporter (TC 3.A.1.106) family. Homodimer.

The protein localises to the cell membrane. It carries out the reaction ATP + H2O + lipid A-core oligosaccharideSide 1 = ADP + phosphate + lipid A-core oligosaccharideSide 2.. In terms of biological role, involved in lipopolysaccharide (LPS) biosynthesis. Translocates lipid A-core from the inner to the outer leaflet of the inner membrane. Transmembrane domains (TMD) form a pore in the inner membrane and the ATP-binding domain (NBD) is responsible for energy generation. This Francisella novicida protein is ATP-dependent lipid A-core flippase.